Consider the following 439-residue polypeptide: Ribosomal protein uS12 methylthiotransferase RimO (439 aa).

Residues 5-116 (PTIAISHLGC…IVNVIERVEL (112 aa)) enclose the MTTase N-terminal domain. Residues C14, C50, C79, C154, C158, and C161 each coordinate [4Fe-4S] cluster. The Radical SAM core domain occupies 140-369 (TTTEGVAYLR…MELQQPISQK (230 aa)). Residues 372–438 (QQEVGKIVDV…TYDLYGQVVN (67 aa)) form the TRAM domain.

This sequence belongs to the methylthiotransferase family. RimO subfamily. Requires [4Fe-4S] cluster as cofactor.

The protein localises to the cytoplasm. The catalysed reaction is L-aspartate(89)-[ribosomal protein uS12]-hydrogen + (sulfur carrier)-SH + AH2 + 2 S-adenosyl-L-methionine = 3-methylsulfanyl-L-aspartate(89)-[ribosomal protein uS12]-hydrogen + (sulfur carrier)-H + 5'-deoxyadenosine + L-methionine + A + S-adenosyl-L-homocysteine + 2 H(+). Its function is as follows. Catalyzes the methylthiolation of an aspartic acid residue of ribosomal protein uS12. This chain is Ribosomal protein uS12 methylthiotransferase RimO, found in Nostoc punctiforme (strain ATCC 29133 / PCC 73102).